Here is a 334-residue protein sequence, read N- to C-terminus: Malate dehydrogenase 2 (334 aa).

Residue 19–25 (IGAGKVG) participates in NAD(+) binding. Substrate-binding residues include R100 and R106. Residues N113 and 136–138 (VSN) contribute to the NAD(+) site. Positions 138 and 169 each coordinate substrate. H193 (proton acceptor) is an active-site residue.

The protein belongs to the LDH/MDH superfamily.

It carries out the reaction (S)-malate + NAD(+) = oxaloacetate + NADH + H(+). Functionally, catalyzes the reversible oxidation of malate to oxaloacetate. This is Malate dehydrogenase 2 from Aquifex aeolicus (strain VF5).